We begin with the raw amino-acid sequence, 388 residues long: Succinate--CoA ligase [ADP-forming] subunit beta (388 aa).

One can recognise an ATP-grasp domain in the interval 9–244 (KQLFAEFGLP…PSQEDKREAH (236 aa)). Residues K46, 53–55 (GRG), E99, S102, and E107 contribute to the ATP site. Residues N199 and D213 each contribute to the Mg(2+) site. Substrate is bound by residues N264 and 321 to 323 (GIV).

This sequence belongs to the succinate/malate CoA ligase beta subunit family. As to quaternary structure, heterotetramer of two alpha and two beta subunits. Requires Mg(2+) as cofactor.

It catalyses the reaction succinate + ATP + CoA = succinyl-CoA + ADP + phosphate. The enzyme catalyses GTP + succinate + CoA = succinyl-CoA + GDP + phosphate. It participates in carbohydrate metabolism; tricarboxylic acid cycle; succinate from succinyl-CoA (ligase route): step 1/1. Functionally, succinyl-CoA synthetase functions in the citric acid cycle (TCA), coupling the hydrolysis of succinyl-CoA to the synthesis of either ATP or GTP and thus represents the only step of substrate-level phosphorylation in the TCA. The beta subunit provides nucleotide specificity of the enzyme and binds the substrate succinate, while the binding sites for coenzyme A and phosphate are found in the alpha subunit. This Vibrio vulnificus (strain YJ016) protein is Succinate--CoA ligase [ADP-forming] subunit beta.